We begin with the raw amino-acid sequence, 266 residues long: Small ribosomal subunit protein mS42 (266 aa).

It belongs to the mitochondrion-specific ribosomal protein mS42 family. In terms of assembly, component of the mitochondrial small ribosomal subunit (mt-SSU). Mature yeast 74S mitochondrial ribosomes consist of a small (37S) and a large (54S) subunit. The 37S small subunit contains a 15S ribosomal RNA (15S mt-rRNA) and 34 different proteins. The 54S large subunit contains a 21S rRNA (21S mt-rRNA) and 46 different proteins. mS42 forms a heterodimer with mS43, building a large protuberance adjacent to the mRNA channel exit in the mt-SSU body.

The protein resides in the mitochondrion. Component of the mitochondrial ribosome (mitoribosome), a dedicated translation machinery responsible for the synthesis of mitochondrial genome-encoded proteins, including at least some of the essential transmembrane subunits of the mitochondrial respiratory chain. The mitoribosomes are attached to the mitochondrial inner membrane and translation products are cotranslationally integrated into the membrane. This chain is Small ribosomal subunit protein mS42 (RSM26), found in Saccharomyces cerevisiae (strain ATCC 204508 / S288c) (Baker's yeast).